We begin with the raw amino-acid sequence, 269 residues long: Regulatory protein RecX (269 aa).

It belongs to the RecX family.

It localises to the cytoplasm. Its function is as follows. Modulates RecA activity. The sequence is that of Regulatory protein RecX from Listeria monocytogenes serotype 4b (strain CLIP80459).